The primary structure comprises 453 residues: Methionine aminopeptidase 2-1 (453 aa).

The segment covering 1–12 (MGSKTPDGHRQS) has biased composition (basic and acidic residues). The disordered stretch occupies residues 1–101 (MGSKTPDGHR…TTPPRVPLST (101 aa)). The span at 46–57 (GEDDDDDDENEE) shows a compositional bias: acidic residues. A compositionally biased stretch (basic residues) spans 67–82 (KKKKRKKSKKKNKKSK). Residue H210 participates in substrate binding. The a divalent metal cation site is built by D231, D242, and H306. Substrate is bound at residue H314. Positions 339 and 434 each coordinate a divalent metal cation.

It belongs to the peptidase M24A family. Methionine aminopeptidase eukaryotic type 2 subfamily. Co(2+) is required as a cofactor. Requires Zn(2+) as cofactor. It depends on Mn(2+) as a cofactor. Fe(2+) serves as cofactor.

The protein localises to the cytoplasm. The catalysed reaction is Release of N-terminal amino acids, preferentially methionine, from peptides and arylamides.. Cotranslationally removes the N-terminal methionine from nascent proteins. The N-terminal methionine is often cleaved when the second residue in the primary sequence is small and uncharged (Met-Ala-, Cys, Gly, Pro, Ser, Thr, or Val). This Aspergillus terreus (strain NIH 2624 / FGSC A1156) protein is Methionine aminopeptidase 2-1.